Consider the following 557-residue polypeptide: MVLSDIEIANSVSMEPISKVADQLGIDKEALCLYGKYKAKINARQLVALKDKPDGKLILVTAISPTPAGEGKTTTSVGLVDALSAIGKKAVIALREPSLGPVFGVKGGAAGGGHAQVVPMEDINLHFTGDFHAIGVANNLLAALIDNHIHHGNSLGIDSRRITWKRVVDMNDRQLRHIVDGLQGKVNGVPREDGYDITVASEIMAILCLSENISDLKARLEKIIIGYNYQGEPVTAKDLKAGGALADLLKDAIHPNLVQTLEHTPALIHGGPFANIAHGCNSVLATKLALKYGDYAVTEAGFGADLGAEKFIDIKCRMSGLRPAAVVLVATIRALKMHGGVQKTDLATENVQAVVDGLPNLDKHLANIQDVYGLPVVVAINKFPLDTDAELQAVYDACNKRGVDVVISDVWANGGAGGRELAEKVVTLAEQDNQFRFVYEEDDSIETKLTKIVTKVYGGKGITLSPAAKRELADLERLGFGNYPICMAKTQYSFSDDAKTLGAPTDFTVTISNLKVSAGAGFIVALTGAIMTMPGLPKVPASETIDIDEEGNITGLF.

66-73 is an ATP binding site; it reads TPAGEGKT.

This sequence belongs to the formate--tetrahydrofolate ligase family.

It carries out the reaction (6S)-5,6,7,8-tetrahydrofolate + formate + ATP = (6R)-10-formyltetrahydrofolate + ADP + phosphate. It functions in the pathway one-carbon metabolism; tetrahydrofolate interconversion. This chain is Formate--tetrahydrofolate ligase 2, found in Streptococcus pyogenes serotype M4 (strain MGAS10750).